The chain runs to 512 residues: Maturase K (512 aa).

The protein belongs to the intron maturase 2 family. MatK subfamily.

The protein localises to the plastid. Its subcellular location is the chloroplast. Its function is as follows. Usually encoded in the trnK tRNA gene intron. Probably assists in splicing its own and other chloroplast group II introns. This chain is Maturase K, found in Koelreuteria paniculata (Goldenrain tree).